A 193-amino-acid chain; its full sequence is Ras-like protein 2 (193 aa).

12 to 19 (GGGGVGKS) contacts GTP. An Effector region motif is present at residues 34 to 42 (YDPTIEDSY). GTP is bound by residues 59–63 (DTAGQ) and 118–121 (NKCD). The residue at position 190 (Cys-190) is a Cysteine methyl ester. Cys-190 carries the S-geranylgeranyl cysteine lipid modification. A propeptide spans 191 to 193 (KLL) (removed in mature form).

The protein belongs to the small GTPase superfamily. Ras family.

It is found in the cell membrane. The catalysed reaction is GTP + H2O = GDP + phosphate + H(+). In terms of biological role, ras proteins bind GDP/GTP and possess intrinsic GTPase activity. The chain is Ras-like protein 2 (RAS-2) from Physarum polycephalum (Slime mold).